Here is a 277-residue protein sequence, read N- to C-terminus: 4-hydroxy-3-methylbut-2-enyl diphosphate reductase (277 aa).

C12 lines the [4Fe-4S] cluster pocket. (2E)-4-hydroxy-3-methylbut-2-enyl diphosphate-binding residues include H36 and H70. Dimethylallyl diphosphate-binding residues include H36 and H70. Isopentenyl diphosphate-binding residues include H36 and H70. [4Fe-4S] cluster is bound at residue C92. A (2E)-4-hydroxy-3-methylbut-2-enyl diphosphate-binding site is contributed by H120. Position 120 (H120) interacts with dimethylallyl diphosphate. H120 provides a ligand contact to isopentenyl diphosphate. E122 functions as the Proton donor in the catalytic mechanism. T158 is a (2E)-4-hydroxy-3-methylbut-2-enyl diphosphate binding site. C186 is a [4Fe-4S] cluster binding site. Positions 214, 216, and 258 each coordinate (2E)-4-hydroxy-3-methylbut-2-enyl diphosphate. Dimethylallyl diphosphate contacts are provided by S214, N216, and S258. S214, N216, and S258 together coordinate isopentenyl diphosphate.

Belongs to the IspH family. [4Fe-4S] cluster serves as cofactor.

It catalyses the reaction isopentenyl diphosphate + 2 oxidized [2Fe-2S]-[ferredoxin] + H2O = (2E)-4-hydroxy-3-methylbut-2-enyl diphosphate + 2 reduced [2Fe-2S]-[ferredoxin] + 2 H(+). The catalysed reaction is dimethylallyl diphosphate + 2 oxidized [2Fe-2S]-[ferredoxin] + H2O = (2E)-4-hydroxy-3-methylbut-2-enyl diphosphate + 2 reduced [2Fe-2S]-[ferredoxin] + 2 H(+). It participates in isoprenoid biosynthesis; dimethylallyl diphosphate biosynthesis; dimethylallyl diphosphate from (2E)-4-hydroxy-3-methylbutenyl diphosphate: step 1/1. It functions in the pathway isoprenoid biosynthesis; isopentenyl diphosphate biosynthesis via DXP pathway; isopentenyl diphosphate from 1-deoxy-D-xylulose 5-phosphate: step 6/6. Catalyzes the conversion of 1-hydroxy-2-methyl-2-(E)-butenyl 4-diphosphate (HMBPP) into a mixture of isopentenyl diphosphate (IPP) and dimethylallyl diphosphate (DMAPP). Acts in the terminal step of the DOXP/MEP pathway for isoprenoid precursor biosynthesis. In Campylobacter jejuni subsp. jejuni serotype O:23/36 (strain 81-176), this protein is 4-hydroxy-3-methylbut-2-enyl diphosphate reductase.